We begin with the raw amino-acid sequence, 325 residues long: Glutarate 2-hydroxylase (325 aa).

Histidine 160, aspartate 162, and histidine 292 together coordinate Fe cation.

It belongs to the glutarate hydroxylase family. In terms of assembly, homotetramer. Fe(2+) is required as a cofactor.

It catalyses the reaction glutarate + 2-oxoglutarate + O2 = (S)-2-hydroxyglutarate + succinate + CO2. The protein operates within amino-acid degradation. Acts as an alpha-ketoglutarate-dependent dioxygenase catalyzing hydroxylation of glutarate (GA) to L-2-hydroxyglutarate (L2HG). Functions in a L-lysine degradation pathway that proceeds via cadaverine, glutarate and L-2-hydroxyglutarate. In Escherichia coli O127:H6 (strain E2348/69 / EPEC), this protein is Glutarate 2-hydroxylase.